The following is a 37-amino-acid chain: Protamine Z3 (37 aa).

Residues 1–37 are disordered; that stretch reads ARSRSRRSYGRGRRRGGRRRRRRRRRRRGGRRGRRSR.

Testis.

The protein localises to the nucleus. It is found in the chromosome. Protamines substitute for histones in the chromatin of sperm during the haploid phase of spermatogenesis. They compact sperm DNA into a highly condensed, stable and inactive complex. The sequence is that of Protamine Z3 from Scyliorhinus canicula (Small-spotted catshark).